The chain runs to 255 residues: Hydroxyacylglutathione hydrolase (255 aa).

Zn(2+) contacts are provided by His-56, His-58, Asp-60, His-61, His-114, Asp-133, and His-171.

This sequence belongs to the metallo-beta-lactamase superfamily. Glyoxalase II family. As to quaternary structure, monomer. Requires Zn(2+) as cofactor.

It catalyses the reaction an S-(2-hydroxyacyl)glutathione + H2O = a 2-hydroxy carboxylate + glutathione + H(+). The protein operates within secondary metabolite metabolism; methylglyoxal degradation; (R)-lactate from methylglyoxal: step 2/2. Thiolesterase that catalyzes the hydrolysis of S-D-lactoyl-glutathione to form glutathione and D-lactic acid. The sequence is that of Hydroxyacylglutathione hydrolase from Bradyrhizobium diazoefficiens (strain JCM 10833 / BCRC 13528 / IAM 13628 / NBRC 14792 / USDA 110).